An 85-amino-acid chain; its full sequence is uncharacterized protein (85 aa).

A run of 2 helical transmembrane segments spans residues 16–34 (WALS…CAYL) and 50–71 (LSCI…KIIF).

It to E.coli YhdT.

It localises to the cell membrane. This is an uncharacterized protein from Haemophilus influenzae (strain ATCC 51907 / DSM 11121 / KW20 / Rd).